Consider the following 175-residue polypeptide: Endoribonuclease YbeY (175 aa).

Zn(2+) is bound by residues His-129, His-133, and His-139.

Belongs to the endoribonuclease YbeY family. Zn(2+) is required as a cofactor.

The protein localises to the cytoplasm. In terms of biological role, single strand-specific metallo-endoribonuclease involved in late-stage 70S ribosome quality control and in maturation of the 3' terminus of the 16S rRNA. The sequence is that of Endoribonuclease YbeY from Lactobacillus johnsonii (strain CNCM I-12250 / La1 / NCC 533).